The sequence spans 155 residues: V-type proton ATPase 16 kDa proteolipid subunit c (155 aa).

Residues 1 to 10 are Lumenal-facing; the sequence is MSEAKSGPEY. A helical membrane pass occupies residues 11–33; that stretch reads ASFFAVMGASAAMVFSALGAAYG. At 34–55 the chain is on the cytoplasmic side; the sequence is TAKSGTGIAAMSVMRPEMIMKS. Residues 56 to 76 form a helical membrane-spanning segment; sequence IIPVVMAGIIAIYGLVVAVLI. Residues 77–92 are Lumenal-facing; the sequence is ANSLNDGISLYRSFLQ. The chain crosses the membrane as a helical span at residues 93 to 114; that stretch reads LGAGLSVGLSGLAAGFAIGIVG. At 115–131 the chain is on the cytoplasmic side; it reads DAGVRGTAQQPRLFVGM. Residues 132-152 form a helical membrane-spanning segment; it reads ILILIFAEVLGLYGLIVALIL. The Lumenal segment spans residues 153–155; that stretch reads STK.

This sequence belongs to the V-ATPase proteolipid subunit family. In terms of assembly, V-ATPase is a heteromultimeric enzyme made up of two complexes: the ATP-hydrolytic V1 complex and the proton translocation V0 complex. The V1 complex consists of three catalytic AB heterodimers that form a heterohexamer, three peripheral stalks each consisting of EG heterodimers, one central rotor including subunits D and F, and the regulatory subunits C and H. The proton translocation complex V0 consists of the proton transport subunit a, a ring of proteolipid subunits c9c'', rotary subunit d, subunits e and f, and the accessory subunits ATP6AP1/Ac45 and ATP6AP2/PRR. Interacts with the V0 complex V-ATPase subunit a4 ATP6V0A4. Interacts with LASS2. Interacts with RNF182; this interaction leads to ubiquitination and degradation via the proteasome pathway. Post-translationally, ubiquitinated by RNF182, leading to its degradation via the ubiquitin-proteasome pathway.

The protein resides in the cytoplasmic vesicle. Its subcellular location is the clathrin-coated vesicle membrane. It is found in the secretory vesicle. It localises to the synaptic vesicle membrane. Functionally, proton-conducting pore forming subunit of the V0 complex of vacuolar(H+)-ATPase (V-ATPase), a multisubunit enzyme composed of a peripheral complex (V1) that hydrolyzes ATP and a membrane integral complex (V0) that translocates protons. V-ATPase is responsible for acidifying and maintaining the pH of intracellular compartments and in some cell types, is targeted to the plasma membrane, where it is responsible for acidifying the extracellular environment. This chain is V-type proton ATPase 16 kDa proteolipid subunit c (ATP6V0C), found in Ovis aries (Sheep).